Reading from the N-terminus, the 389-residue chain is Succinate--CoA ligase [ADP-forming] subunit beta (389 aa).

The ATP-grasp domain maps to 9 to 244 (KQLLAEYGIP…KTQEDETEVT (236 aa)). ATP is bound by residues K46, 53–55 (GRG), G102, and E107. Mg(2+) contacts are provided by N199 and D213. Substrate-binding positions include N264 and 321 to 323 (GIV).

The protein belongs to the succinate/malate CoA ligase beta subunit family. As to quaternary structure, heterotetramer of two alpha and two beta subunits. It depends on Mg(2+) as a cofactor.

The enzyme catalyses succinate + ATP + CoA = succinyl-CoA + ADP + phosphate. It catalyses the reaction GTP + succinate + CoA = succinyl-CoA + GDP + phosphate. It functions in the pathway carbohydrate metabolism; tricarboxylic acid cycle; succinate from succinyl-CoA (ligase route): step 1/1. Succinyl-CoA synthetase functions in the citric acid cycle (TCA), coupling the hydrolysis of succinyl-CoA to the synthesis of either ATP or GTP and thus represents the only step of substrate-level phosphorylation in the TCA. The beta subunit provides nucleotide specificity of the enzyme and binds the substrate succinate, while the binding sites for coenzyme A and phosphate are found in the alpha subunit. This chain is Succinate--CoA ligase [ADP-forming] subunit beta, found in Xanthomonas oryzae pv. oryzae (strain MAFF 311018).